The sequence spans 1527 residues: DNA-directed RNA polymerase subunit beta'' (1527 aa).

Residues cysteine 220, cysteine 296, cysteine 303, and cysteine 306 each contribute to the Zn(2+) site. 2 stretches are compositionally biased toward basic and acidic residues: residues 644-661 (RTQE…RTRE) and 671-681 (PENKYRTREGE). 2 disordered regions span residues 644-681 (RTQE…REGE) and 712-793 (YRTL…KKEG). 2 stretches are compositionally biased toward acidic residues: residues 737 to 755 (GEYE…SSED) and 763 to 786 (TLEE…PEED).

Belongs to the RNA polymerase beta' chain family. RpoC2 subfamily. In terms of assembly, in plastids the minimal PEP RNA polymerase catalytic core is composed of four subunits: alpha, beta, beta', and beta''. When a (nuclear-encoded) sigma factor is associated with the core the holoenzyme is formed, which can initiate transcription. Zn(2+) is required as a cofactor.

The protein resides in the plastid. It localises to the chloroplast. It carries out the reaction RNA(n) + a ribonucleoside 5'-triphosphate = RNA(n+1) + diphosphate. In terms of biological role, DNA-dependent RNA polymerase catalyzes the transcription of DNA into RNA using the four ribonucleoside triphosphates as substrates. This is DNA-directed RNA polymerase subunit beta'' from Zea mays (Maize).